Reading from the N-terminus, the 79-residue chain is Tungsten-containing formylmethanofuran dehydrogenase 2 subunit G (79 aa).

2 4Fe-4S ferredoxin-type domains span residues 2-31 (VKIV…SPNV) and 51-79 (TVSV…EIKT). Residues Cys-11, Cys-14, Cys-17, Cys-21, Cys-60, Cys-63, Cys-66, and Cys-70 each coordinate [4Fe-4S] cluster.

It depends on [4Fe-4S] cluster as a cofactor.

It carries out the reaction N-formylmethanofuran + 2 oxidized [2Fe-2S]-[ferredoxin] + H2O = methanofuran + 2 reduced [2Fe-2S]-[ferredoxin] + CO2 + H(+). Its pathway is one-carbon metabolism; methanogenesis from CO(2); 5,10-methenyl-5,6,7,8-tetrahydromethanopterin from CO(2): step 1/3. Its activity is regulated as follows. Not inactivated by cyanide. Its function is as follows. Catalyzes the reversible oxidation of CO(2) and methanofuran (MFR) to N-formylmethanofuran (CHO-MFR). This enzyme is oxygen-labile. May function as an electron transfer protein. The polypeptide is Tungsten-containing formylmethanofuran dehydrogenase 2 subunit G (fwdG) (Methanopyrus kandleri (strain AV19 / DSM 6324 / JCM 9639 / NBRC 100938)).